A 346-amino-acid polypeptide reads, in one-letter code: fMet-Leu-Phe receptor (346 aa).

2 N-linked (GlcNAc...) asparagine glycosylation sites follow: Asn1 and Asn7. Topologically, residues 1–24 (NSSLPTNISGGTPAVSAGYLFLDI) are extracellular. A helical transmembrane segment spans residues 25–47 (VTYLVFAVTFVLGVLGNGLVIWV). Over 48-58 (AGFRMTHTVTT) the chain is Cytoplasmic. A helical transmembrane segment spans residues 59 to 80 (ISYLNLAVADFCFTSTLPFFMV). The Extracellular portion of the chain corresponds to 81-97 (KKAMGGHWPFGWFLCKF). A disulfide bridge connects residues Cys95 and Cys173. Residues 98–118 (IFTIVDINLFGSVFLIALIAL) form a helical membrane-spanning segment. Topologically, residues 119-137 (DRCVCVLHPVWTQNHRTVS) are cytoplasmic. The helical transmembrane segment at 138-159 (LAKKVIIGPWVMALLLTLPVII) threads the bilayer. Topologically, residues 160 to 202 (RVTTVPGKMGTVACTFNFSPWTNDPKERIKVAVAMLTVRGIIR) are extracellular. Residues 203–223 (FIIGFSAPMSIVAVSYGLIAT) traverse the membrane as a helical segment. The Cytoplasmic portion of the chain corresponds to 224–239 (KIDKQGLIKSSRTLRV). The helical transmembrane segment at 240–263 (LSFVAAAFFLSWSPYQVVALIATV) threads the bilayer. Over 264-282 (RIRELLQGMYKEIGIAVDV) the chain is Extracellular. A helical transmembrane segment spans residues 283–302 (TSALAFFNSCLNPMLYVFMG). The Cytoplasmic segment spans residues 303 to 346 (QDFRERLIHALPASLERALTEDSTQTSDTATNSTLPSAEVALQA). Positions 322–346 (TEDSTQTSDTATNSTLPSAEVALQA) are disordered. Over residues 323–338 (EDSTQTSDTATNSTLP) the composition is skewed to polar residues.

This sequence belongs to the G-protein coupled receptor 1 family. Post-translationally, phosphorylated; which is necessary for desensitization.

It localises to the cell membrane. Its function is as follows. High affinity receptor for N-formyl-methionyl peptides (fMLP), which are powerful neutrophil chemotactic factors. Binding of fMLP to the receptor stimulates intracellular calcium mobilization and superoxide anion release. This response is mediated via a G-protein that activates a phosphatidylinositol-calcium second messenger system. Receptor for TAFA4, mediates its effects on chemoattracting macrophages, promoting phagocytosis and increasing ROS release. Receptor for cathepsin CTSG, leading to increased phagocyte chemotaxis. The sequence is that of fMet-Leu-Phe receptor (FPR1) from Gorilla gorilla gorilla (Western lowland gorilla).